The chain runs to 279 residues: 3-methyl-2-oxobutanoate hydroxymethyltransferase (279 aa).

2 residues coordinate Mg(2+): D44 and D83. 3-methyl-2-oxobutanoate-binding positions include D44–S45, D83, and K113. Mg(2+) is bound at residue E115. Catalysis depends on E182, which acts as the Proton acceptor.

Belongs to the PanB family. As to quaternary structure, homodecamer; pentamer of dimers. Requires Mg(2+) as cofactor.

Its subcellular location is the cytoplasm. The catalysed reaction is 3-methyl-2-oxobutanoate + (6R)-5,10-methylene-5,6,7,8-tetrahydrofolate + H2O = 2-dehydropantoate + (6S)-5,6,7,8-tetrahydrofolate. It functions in the pathway cofactor biosynthesis; (R)-pantothenate biosynthesis; (R)-pantoate from 3-methyl-2-oxobutanoate: step 1/2. Functionally, catalyzes the reversible reaction in which hydroxymethyl group from 5,10-methylenetetrahydrofolate is transferred onto alpha-ketoisovalerate to form ketopantoate. The sequence is that of 3-methyl-2-oxobutanoate hydroxymethyltransferase from Desulfotalea psychrophila (strain LSv54 / DSM 12343).